Here is a 60-residue protein sequence, read N- to C-terminus: Small ribosomal subunit protein eS17 (60 aa).

The protein belongs to the eukaryotic ribosomal protein eS17 family.

In Methanosphaera stadtmanae (strain ATCC 43021 / DSM 3091 / JCM 11832 / MCB-3), this protein is Small ribosomal subunit protein eS17.